The primary structure comprises 372 residues: Neuropeptide S receptor (372 aa).

At 1–52 (MPANLTEGSFHANQTVPMLDSSPVACTEIVTFTEALEAEEWGSFYSSFKTEQ) the chain is on the extracellular side. 2 N-linked (GlcNAc...) asparagine glycosylation sites follow: Asn-4 and Asn-13. Residues 53-73 (LITLWVLFVFTIVGNSVVLFS) traverse the membrane as a helical segment. The Cytoplasmic portion of the chain corresponds to 74–82 (TWRRKRKSR). The helical transmembrane segment at 83–103 (MTFFVTQLAITDSFTGLINIL) threads the bilayer. At 104 to 122 (TDIIWRFTGDFMAPDLVCR) the chain is on the extracellular side. Cys-121 and Cys-198 are disulfide-bonded. Residues 123-143 (IVRYLQVVLLYASTYVLVSLS) form a helical membrane-spanning segment. The Cytoplasmic segment spans residues 144–165 (IDRYHAIVYPMKFLQGAEKQAK). The helical transmembrane segment at 166–186 (VLIGIAWSLSFLFSIPTLIIF) threads the bilayer. Residues 187–213 (GKRTLSNGEVQCWALWPDDSYWTPYMT) are Extracellular-facing. A helical membrane pass occupies residues 214–234 (IVAFLVYFIPLTIISVIYGLV). Over 235–276 (IRTIWIKSKAHETVISNCSDGELCCSYNRGLISKAKIKAIKY) the chain is Cytoplasmic. A helical membrane pass occupies residues 277–297 (SIVIILAFICCWSPYFLFDML). Over 298-313 (DNFNLLPDTKERFYAS) the chain is Extracellular. A helical membrane pass occupies residues 314 to 334 (VIIQNLPALNSAINPLIYCIF). Residues 335 to 372 (SGSLCSPCKVQRSQDSRMTYRERSERHEMQILSKPEFI) are Cytoplasmic-facing.

Belongs to the G-protein coupled receptor 1 family. Vasopressin/oxytocin receptor subfamily.

The protein resides in the cell membrane. Its function is as follows. G-protein coupled receptor for neuropeptide S (NPS). Promotes mobilization of intracellular Ca(2+) stores. Inhibits cell growth in response to NPS binding. Involved in pathogenesis of asthma and other IgE-mediated diseases. This is Neuropeptide S receptor (Npsr1) from Rattus norvegicus (Rat).